Here is a 419-residue protein sequence, read N- to C-terminus: Keratin, type I cytoskeletal 47 kDa (419 aa).

Residues 1–81 (MSFRSSSSYS…SSSFSNFGGN (81 aa)) are head. Residues 82 to 117 (DKQTMQNLNDRLASYLEKVRALEAANADLELKIREW) form a coil 1A region. Positions 82 to 397 (DKQTMQNLND…RLLEGEFGSL (316 aa)) constitute an IF rod domain. Residues 118-139 (YEKQKGSGIGAGSKDFSKYFEI) are linker 1. Residues 140–231 (ISDLRNKILS…KNHEEEMSIA (92 aa)) are coil 1B. A linker 12 region spans residues 232-254 (KSSSAGQVNVEMDAAPGIDLNKI). The interval 255–393 (LSDMRADYET…ETYRRLLEGE (139 aa)) is coil 2. A tail region spans residues 394–419 (FGSLKSSIVQATEVSTSQSSSSSKKD).

It belongs to the intermediate filament family. Heterotetramer of two type I and two type II keratins.

This Xenopus laevis (African clawed frog) protein is Keratin, type I cytoskeletal 47 kDa (xk81b2).